A 71-amino-acid chain; its full sequence is DNA-directed RNA polymerase subunit omega (71 aa).

It belongs to the RNA polymerase subunit omega family. As to quaternary structure, the RNAP catalytic core consists of 2 alpha, 1 beta, 1 beta' and 1 omega subunit. When a sigma factor is associated with the core the holoenzyme is formed, which can initiate transcription.

The catalysed reaction is RNA(n) + a ribonucleoside 5'-triphosphate = RNA(n+1) + diphosphate. Functionally, promotes RNA polymerase assembly. Latches the N- and C-terminal regions of the beta' subunit thereby facilitating its interaction with the beta and alpha subunits. In Alkaliphilus oremlandii (strain OhILAs) (Clostridium oremlandii (strain OhILAs)), this protein is DNA-directed RNA polymerase subunit omega.